The chain runs to 338 residues: tRNA N6-adenosine threonylcarbamoyltransferase (338 aa).

The Fe cation site is built by His114 and His118. Residues 136 to 140, Asp169, Gly182, Asp186, and Asn275 contribute to the substrate site; that span reads LVSGG. Residue Asp301 coordinates Fe cation.

It belongs to the KAE1 / TsaD family. Requires Fe(2+) as cofactor.

The protein resides in the cytoplasm. The catalysed reaction is L-threonylcarbamoyladenylate + adenosine(37) in tRNA = N(6)-L-threonylcarbamoyladenosine(37) in tRNA + AMP + H(+). Its function is as follows. Required for the formation of a threonylcarbamoyl group on adenosine at position 37 (t(6)A37) in tRNAs that read codons beginning with adenine. Is involved in the transfer of the threonylcarbamoyl moiety of threonylcarbamoyl-AMP (TC-AMP) to the N6 group of A37, together with TsaE and TsaB. TsaD likely plays a direct catalytic role in this reaction. The sequence is that of tRNA N6-adenosine threonylcarbamoyltransferase from Streptococcus equi subsp. zooepidemicus (strain MGCS10565).